A 350-amino-acid polypeptide reads, in one-letter code: Histidinol-phosphate aminotransferase 1 (350 aa).

Residue lysine 209 is modified to N6-(pyridoxal phosphate)lysine.

It belongs to the class-II pyridoxal-phosphate-dependent aminotransferase family. Histidinol-phosphate aminotransferase subfamily. In terms of assembly, homodimer. Pyridoxal 5'-phosphate serves as cofactor.

The enzyme catalyses L-histidinol phosphate + 2-oxoglutarate = 3-(imidazol-4-yl)-2-oxopropyl phosphate + L-glutamate. The protein operates within amino-acid biosynthesis; L-histidine biosynthesis; L-histidine from 5-phospho-alpha-D-ribose 1-diphosphate: step 7/9. The chain is Histidinol-phosphate aminotransferase 1 (hisC1) from Bradyrhizobium diazoefficiens (strain JCM 10833 / BCRC 13528 / IAM 13628 / NBRC 14792 / USDA 110).